Reading from the N-terminus, the 181-residue chain is ATP-dependent protease subunit HslV (181 aa).

The active site involves threonine 9. 3 residues coordinate Na(+): alanine 166, cysteine 169, and threonine 172.

It belongs to the peptidase T1B family. HslV subfamily. In terms of assembly, a double ring-shaped homohexamer of HslV is capped on each side by a ring-shaped HslU homohexamer. The assembly of the HslU/HslV complex is dependent on binding of ATP.

Its subcellular location is the cytoplasm. The enzyme catalyses ATP-dependent cleavage of peptide bonds with broad specificity.. With respect to regulation, allosterically activated by HslU binding. Its function is as follows. Protease subunit of a proteasome-like degradation complex believed to be a general protein degrading machinery. This Staphylococcus aureus (strain JH1) protein is ATP-dependent protease subunit HslV.